The following is a 159-amino-acid chain: 3-hydroxyacyl-[acyl-carrier-protein] dehydratase FabZ (159 aa).

Histidine 58 is an active-site residue.

Belongs to the thioester dehydratase family. FabZ subfamily.

The protein localises to the cytoplasm. The enzyme catalyses a (3R)-hydroxyacyl-[ACP] = a (2E)-enoyl-[ACP] + H2O. Its function is as follows. Involved in unsaturated fatty acids biosynthesis. Catalyzes the dehydration of short chain beta-hydroxyacyl-ACPs and long chain saturated and unsaturated beta-hydroxyacyl-ACPs. In Helicobacter pylori (strain ATCC 700392 / 26695) (Campylobacter pylori), this protein is 3-hydroxyacyl-[acyl-carrier-protein] dehydratase FabZ.